The sequence spans 141 residues: Sporulation-specific cell division protein SsgB (141 aa).

This sequence belongs to the SsgA family. As to quaternary structure, interacts with SsgA. Interacts with FtsZ (via N-terminus).

It localises to the cell septum. In terms of biological role, involved in sporulation-specific cell division. Required for early stages of sporulation. Important in the process of growth cessation prior to sporulation-specific cell division. Recruits cell division protein FtsZ to the future septum sites and tethers the contractile ring structure (Z ring) to the cytoplasmic membrane during sporulation. Stimulates polymerization and filament length of FtsZ in vitro. The sequence is that of Sporulation-specific cell division protein SsgB from Saccharopolyspora erythraea (strain ATCC 11635 / DSM 40517 / JCM 4748 / NBRC 13426 / NCIMB 8594 / NRRL 2338).